The chain runs to 192 residues: Zinc finger CCHC domain-containing protein 10 (192 aa).

Residues 43-60 form a CCHC-type zinc finger; that stretch reads VRCQKCLEFGHWTYECTG. Residues 89 to 192 form a disordered region; the sequence is QSIGETNVER…DEPPKKKKKK (104 aa). Composition is skewed to low complexity over residues 109-136 and 144-179; these read TSSS…SSSS and SSSS…STDS.

The chain is Zinc finger CCHC domain-containing protein 10 (ZCCHC10) from Homo sapiens (Human).